A 245-amino-acid chain; its full sequence is 1-(5-phosphoribosyl)-5-[(5-phosphoribosylamino)methylideneamino] imidazole-4-carboxamide isomerase (245 aa).

D7 acts as the Proton acceptor in catalysis. The active-site Proton donor is the D129.

It belongs to the HisA/HisF family.

It is found in the cytoplasm. It carries out the reaction 1-(5-phospho-beta-D-ribosyl)-5-[(5-phospho-beta-D-ribosylamino)methylideneamino]imidazole-4-carboxamide = 5-[(5-phospho-1-deoxy-D-ribulos-1-ylimino)methylamino]-1-(5-phospho-beta-D-ribosyl)imidazole-4-carboxamide. The protein operates within amino-acid biosynthesis; L-histidine biosynthesis; L-histidine from 5-phospho-alpha-D-ribose 1-diphosphate: step 4/9. In Citrobacter koseri (strain ATCC BAA-895 / CDC 4225-83 / SGSC4696), this protein is 1-(5-phosphoribosyl)-5-[(5-phosphoribosylamino)methylideneamino] imidazole-4-carboxamide isomerase.